Consider the following 479-residue polypeptide: Caspase-8 (479 aa).

The propeptide occupies 1-216 (MDFSRNLYDI…TISDSPREQD (216 aa)). DED domains follow at residues 2 to 80 (DFSR…TYLN) and 100 to 177 (AYRV…IIND). 2 positions are modified to phosphoserine: Ser188 and Ser211. Position 224 is an N6-acetyllysine (Lys224). His317 is an active-site residue. The residue at position 334 (Tyr334) is a Phosphotyrosine. Residue Cys360 is part of the active site. Residues 375-384 (SEEQPYLEMD) constitute a propeptide that is removed on maturation. Tyr380 is subject to Phosphotyrosine; by SRC. Position 387 is a phosphoserine; by CDK1 (Ser387). At Arg413 the chain carries (Microbial infection) ADP-riboxanated arginine.

It belongs to the peptidase C14A family. In terms of assembly, heterotetramer that consists of two anti-parallel arranged heterodimers, each one formed by a 18 kDa (p18) and a 10 kDa (p10) subunit. Component of the death-induced signaling complex (DISC) composed of cell surface receptor FAS/CD95 or TNFRSF1A, adapter protein FADD and the CASP8 protease; recruitment of CASP8 to the complex is required for processing of CASP8 into the p18 and p10 subunits. Component of the AIM2 PANoptosome complex, a multiprotein complex that drives inflammatory cell death (PANoptosis). Interacts with CFLAR and PEA15. Interacts with TNFAIP8L2. Interacts with CASP8AP2. Interacts with RFFL and RNF34; negatively regulate CASP8 through proteasomal degradation. Interacts with NOL3; decreases CASP8 activity in a mitochondria localization- and phosphorylation-dependent manner and this interaction is dissociated by calcium. Interacts with UBR2ca. Interacts with RIPK1. Interacts with stimulated TNFRSF10B; this interaction is followed by CASP8 proteolytic cleavage and activation. Interacts (phosphorylated on Tyr-380) with PIK3R1. As to quaternary structure, interacts at the endoplasmic reticulum with a complex containing BCAP31, BAP29, BCL2 and/or BCL2L1. (Microbial infection) Interacts with human cytomegalovirus/HHV-5 protein vICA/UL36; this interaction inhibits CASP8 activation. In terms of assembly, (Microbial infection) Interacts with NleF from pathogenic E.coli. As to quaternary structure, (Microbial infection) Interacts with molluscum contagiosum virus protein MC160. (Microbial infection) Interacts (via RIP homotypic interaction motif) with herpes simplex virus 1/HHV-1 protein RIR1/ICP6 (via RIP homotypic interaction motif); this interaction prevents necroptosis activation. In terms of assembly, (Microbial infection) Interacts (via RIP homotypic interaction motif) with herpes simplex virus 2/HHV-2 protein RIR1/ICP10 (via RIP homotypic interaction motif); this interaction prevents necroptosis activation. Post-translationally, generation of the p10 and p18 subunits requires association with the death-inducing signaling complex (DISC), whereas additional processing is likely due to the autocatalytic activity of the activated protease. GZMB and CASP10 can be involved in these processing events. In terms of processing, phosphorylation on Ser-387 during mitosis by CDK1 inhibits activation by proteolysis and prevents apoptosis. Phosphorylation on Tyr-380 by SRC is mediated by interaction with the SRC SH2 domain and does not affect dimerization or recruitment to the death-inducing signaling complex (DISC) but negatively regulates DISC-mediated processing and activation of CASP8, down-regulating its proapoptotic function. Phosphorylation on Tyr-380 also enhances localization to lamellipodia in migrating cells. (Microbial infection) ADP-riboxanation by C.violaceum CopC blocks CASP8 processing, preventing CASP8 activation and ability to mediate extrinsic apoptosis. Post-translationally, (Microbial infection) Proteolytically cleaved by the cowpox virus CRMA death inhibitory protein. As to expression, isoform 1, isoform 5 and isoform 7 are expressed in a wide variety of tissues. Highest expression in peripheral blood leukocytes, spleen, thymus and liver. Barely detectable in brain, testis and skeletal muscle.

It is found in the cytoplasm. The protein resides in the nucleus. The protein localises to the cell projection. It localises to the lamellipodium. It carries out the reaction Strict requirement for Asp at position P1 and has a preferred cleavage sequence of (Leu/Asp/Val)-Glu-Thr-Asp-|-(Gly/Ser/Ala).. CASP8 activity is restricted by RIPK1. Inhibited by the effector protein NleF that is produced by pathogenic E.coli; this inhibits apoptosis. Thiol protease that plays a key role in programmed cell death by acting as a molecular switch for apoptosis, necroptosis and pyroptosis, and is required to prevent tissue damage during embryonic development and adulthood. Initiator protease that induces extrinsic apoptosis by mediating cleavage and activation of effector caspases responsible for FAS/CD95-mediated and TNFRSF1A-induced cell death. Cleaves and activates effector caspases CASP3, CASP4, CASP6, CASP7, CASP9 and CASP10. Binding to the adapter molecule FADD recruits it to either receptor FAS/TNFRSF6 or TNFRSF1A. The resulting aggregate called the death-inducing signaling complex (DISC) performs CASP8 proteolytic activation. The active dimeric enzyme is then liberated from the DISC and free to activate downstream apoptotic proteases. Proteolytic fragments of the N-terminal propeptide (termed CAP3, CAP5 and CAP6) are likely retained in the DISC. In addition to extrinsic apoptosis, also acts as a negative regulator of necroptosis: acts by cleaving RIPK1 at 'Asp-324', which is crucial to inhibit RIPK1 kinase activity, limiting TNF-induced apoptosis, necroptosis and inflammatory response. Also able to initiate pyroptosis by mediating cleavage and activation of gasdermin-C and -D (GSDMC and GSDMD, respectively): gasdermin cleavage promotes release of the N-terminal moiety that binds to membranes and forms pores, triggering pyroptosis. Initiates pyroptosis following inactivation of MAP3K7/TAK1. Also acts as a regulator of innate immunity by mediating cleavage and inactivation of N4BP1 downstream of TLR3 or TLR4, thereby promoting cytokine production. May participate in the Granzyme B (GZMB) cell death pathways. Cleaves PARP1 and PARP2. Independent of its protease activity, promotes cell migration following phosphorylation at Tyr-380. In terms of biological role, lacks the catalytic site and may interfere with the pro-apoptotic activity of the complex. Its function is as follows. Lacks the catalytic site and may interfere with the pro-apoptotic activity of the complex. Acts as an inhibitor of the caspase cascade. This chain is Caspase-8, found in Homo sapiens (Human).